The following is a 958-amino-acid chain: Probable protein phosphatase DDB_G0282105 (958 aa).

2 helical membrane passes run 2-22 and 26-46; these read VLMM…SLMV and FLEF…ILFF. Residues 142–330 are a coiled coil; that stretch reads SASQQSELTN…KDKERERSSS (189 aa). Positions 312-328 are enriched in basic and acidic residues; sequence QEKEKQKLEKDKERERS. Disordered regions lie at residues 312–361, 380–421, 445–475, 491–525, and 619–659; these read QEKE…PIPI, SVNG…PKFK, HLGS…TTPI, ITSP…ILSP, and NNNN…NDNK. Composition is skewed to low complexity over residues 329–361, 390–401, 452–475, 491–515, and 619–655; these read SSFS…PIPI, SSVSPPSSSYLR, TPAN…TTPI, ITSP…SSSS, and NNNN…NNNK. Residues 613–666 are a coiled coil; the sequence is NFLKTNNNNNKNNIEESNNNNNNNNNNNNNNNNNNNNNNNNNKNDNKEVNSKLE. Residues 675 to 958 form the PPM-type phosphatase domain; sequence KIGLRRAKKK…DNVTVIIVKL (284 aa). Residues D722, G723, D905, and D949 each contribute to the Mn(2+) site.

The protein in the C-terminal section; belongs to the PP2C family. Requires Mg(2+) as cofactor. The cofactor is Mn(2+).

The protein resides in the membrane. It catalyses the reaction O-phospho-L-seryl-[protein] + H2O = L-seryl-[protein] + phosphate. It carries out the reaction O-phospho-L-threonyl-[protein] + H2O = L-threonyl-[protein] + phosphate. The protein is Probable protein phosphatase DDB_G0282105 of Dictyostelium discoideum (Social amoeba).